Consider the following 319-residue polypeptide: Non-homologous end joining protein Ku (319 aa).

Residues Ile-10–Glu-188 form the Ku domain. Positions Gln-252–Ala-319 are disordered. Over residues Ser-260–Arg-274 the composition is skewed to basic and acidic residues. Over residues Thr-305–Ala-319 the composition is skewed to basic residues.

Belongs to the prokaryotic Ku family. Homodimer. Interacts with LigD.

In terms of biological role, with LigD forms a non-homologous end joining (NHEJ) DNA repair enzyme, which repairs dsDNA breaks with reduced fidelity. Binds linear dsDNA with 5'- and 3'- overhangs but not closed circular dsDNA nor ssDNA. Recruits and stimulates the ligase activity of LigD. The chain is Non-homologous end joining protein Ku from Streptomyces avermitilis (strain ATCC 31267 / DSM 46492 / JCM 5070 / NBRC 14893 / NCIMB 12804 / NRRL 8165 / MA-4680).